The following is a 750-amino-acid chain: MGSSSDIVPDRSPADDVAPVTDTKIPKEEPLTLRRTRPSRACTVRAQQRLQELQAAERKLKPPKKEYKREQHRRREEVVEEDEDSEDDDQEDEENDGDDESNPKQCVAGGSSTKIITSLVPPPEPSQMPRWNLRSMWELASVLNFLHVFRPLLKINAEFSAEEFETALLTPNDTLSDIHIPLLKAIPPVTRMALTRDTWVTVLCRKIRDCWHWVAEGDLPIVALQGREIEVYKNLDPAIRVVILKALCDIRVEQEDIRSYIDNSLKTGVHLSVFRKDRVGGDSHGVNFWYEEDPLIGHRLYREIRKAEVLKVKTKGSKILPNITYQWETVATNFDEFQDVSEKLLQSSSRIEVSLGKKLVKDMLPEIEKEHKRKEKLLKKQHRQALLLDNFVVVDGLAGRSLRDRKPVRYTFDDYDKSINDAIKITKKKHPSPEHPLHRRESARLDALANGRSTSSTHPTEPVNDTASGRSSDFADYDDFDEHRDESLDRRRRQRPQRYSATDFVETVSDNEVEFQSDDDIYGEAVYDEEYLKKRKQKKLSSGSEGDEEKGDEEYKWDEDNAEYEEEEEEEEEEDSLSASEEDSDEPRRAKKMPRRETKLRSRSNDFRPGLRRSKRATRIDYQQYEFSDSDKEATGLAKRKRFVEPDEPSDETGNGDFTMGSQDSEENANDPETKSGEEEEPRDVNDNADTTNGKENNQLNKSNGTTDQEEVEGVVGKRRYLDLNELAPVSGFDDGPSTVLKDDDKTDNS.

A disordered region spans residues 1-125 (MGSSSDIVPD…ITSLVPPPEP (125 aa)). Residues 45 to 54 (RAQQRLQELQ) show a composition bias toward low complexity. Positions 55–77 (AAERKLKPPKKEYKREQHRRREE) are enriched in basic and acidic residues. Residues 78-100 (VVEEDEDSEDDDQEDEENDGDDE) show a composition bias toward acidic residues. The region spanning 133–192 (LRSMWELASVLNFLHVFRPLLKINAEFSAEEFETALLTPNDTLSDIHIPLLKAIPPVTRM) is the DDT domain. Disordered stretches follow at residues 450–505 (NGRS…TDFV) and 532–750 (LKKR…TDNS). The segment covering 451–471 (GRSTSSTHPTEPVNDTASGRS) has biased composition (polar residues). Positions 545–585 (EGDEEKGDEEYKWDEDNAEYEEEEEEEEEEDSLSASEEDSD) are enriched in acidic residues. The span at 595–606 (RRETKLRSRSND) shows a compositional bias: basic and acidic residues. Polar residues predominate over residues 688-707 (NADTTNGKENNQLNKSNGTT). The segment covering 741–750 (LKDDDKTDNS) has biased composition (basic and acidic residues).

Interacts (via the DDT domain) with CHR11 (via C-terminus).

Its subcellular location is the nucleus. Functionally, probable transcription regulator. This Arabidopsis thaliana (Mouse-ear cress) protein is DDT domain-containing protein DDR4.